A 1329-amino-acid chain; its full sequence is Synergin gamma (1329 aa).

Positions 112–152 form a coiled coil; that stretch reads MQKQFAEEQQKRFEQQQKLLEEERKRRQFEEQKQKLRLLSS. The tract at residues 175 to 211 is disordered; that stretch reads GFSRDAKMHPTPASHPKKPDCPTSSHSTKTVSPSSAF. Over residues 197–209 the composition is skewed to low complexity; that stretch reads TSSHSTKTVSPSS. In terms of domain architecture, EH spans 393–504; it reads NESLVPDAYK…TPVSQPTAMT (112 aa). The DFXDF motif 1 signature appears at 555–559; that stretch reads DFQDF. Ser571 carries the phosphoserine modification. Residues 578-594 show a composition bias toward polar residues; that stretch reads VPASSKTSNSQHGNSAP. Positions 578 to 600 are disordered; the sequence is VPASSKTSNSQHGNSAPSLLIPL. Lys609 carries the N6-acetyllysine modification. Residues 614–878 are interaction with AP1G1; it reads KGISAEKPSE…ADFHSSKFSS (265 aa). Disordered stretches follow at residues 661–701 and 730–753; these read GTDD…TQTQ and AFSTSKSVSSRPQPAGSAAAPASL. A Phosphoserine modification is found at Ser676. An interaction with AP1G1, AP1G2 and GGA1 region spans residues 761-773; it reads LADDFGEFNLFGE. The DFXDF motif 2 signature appears at 785–789; the sequence is DFADF. The disordered stretch occupies residues 797–835; the sequence is IPSEPKADDKYEALREEGSPGALSTSTVEGAHNPPVSSS. The span at 801-814 shows a compositional bias: basic and acidic residues; that stretch reads PKADDKYEALREEG. Ser815 bears the Phosphoserine mark. N6-acetyllysine is present on Lys836. A phosphoserine mark is found at Ser844 and Ser864. Disordered regions lie at residues 856–922, 941–1042, and 1088–1113; these read KENT…DSED, HVMS…FGEF, and SLSLGDKEISRSSPSPALEQPFRDRS. Residues 864-873 are compositionally biased toward basic and acidic residues; sequence SDGDFADFHS. Positions 867-871 match the DFXDF motif 3 motif; it reads DFADF. The segment covering 874–883 has biased composition (low complexity); that stretch reads SKFSSTSSDK. 9 positions are modified to phosphoserine: Ser904, Ser944, Ser947, Ser997, Ser1021, Ser1088, Ser1090, Ser1102, and Ser1113. The span at 944 to 955 shows a compositional bias: polar residues; the sequence is SDSSLDLPTVSG. Positions 1016 to 1028 are enriched in polar residues; sequence ENTCPSPASSVAS. Thr1115 carries the phosphothreonine modification.

In terms of assembly, self-associates. Interacts with GGA1 (via GAE domain). Interacts with GGA2 and GGA3. Interacts with AP1G1 (via GAE domain), a subunit of adapter protein complex AP-1. Interacts with AP1G2 (via GAE domain) a subunit of adapter protein complex AP-1. Component of the aftiphilin/p200/gamma-synergin complex, at least composed of AFTPH/aftiphilin, HEATR5B/p200a and SYNRG/gamma-synergin, which plays a role in the AP1G1/AP-1-mediated trafficking of transferrin from early to recycling endosomes. Within the complex interacts with AFTPH/aftiphilin and HEATR5B/p200a; the interactions are direct. Interacts (via EH domain) with SCAMP1. In terms of tissue distribution, detected in brain and liver (at protein level). Ubiquitously expressed.

It is found in the cytoplasm. The protein resides in the golgi apparatus. Its subcellular location is the trans-Golgi network membrane. The protein localises to the perinuclear region. It localises to the cytoplasmic vesicle. It is found in the clathrin-coated vesicle. Plays a role in endocytosis and/or membrane trafficking at the trans-Golgi network (TGN). May act by linking the adapter protein complex AP-1 to other proteins. Component of clathrin-coated vesicles. Component of the aftiphilin/p200/gamma-synergin complex, which plays roles in AP1G1/AP-1-mediated protein trafficking including the trafficking of transferrin from early to recycling endosomes, and the membrane trafficking of furin and the lysosomal enzyme cathepsin D between the trans-Golgi network (TGN) and endosomes. In Rattus norvegicus (Rat), this protein is Synergin gamma (Synrg).